The sequence spans 505 residues: uncharacterized protein (505 aa).

Residues 1–16 (MPPTASLTRSPPTASQ) are compositionally biased toward polar residues. The tract at residues 1–474 (MPPTASLTRS…TPPTASLTRT (474 aa)) is disordered. Low complexity-rich tracts occupy residues 17-33 (TRTLPRASRTRTPPRAS) and 40-59 (TASLRRTPSRASRTRTPPRA). Over residues 66-78 (SRASLTRTLSRAS) the composition is skewed to polar residues. 3 stretches are compositionally biased toward low complexity: residues 96-122 (SLTRTPPTASRTRSLPRASRTRTPPRT), 129-140 (PRTSQTRTPPRA), and 147-158 (SRASRTRTPPRA). 2 stretches are compositionally biased toward polar residues: residues 165-177 (SRASLTRTPSRAS) and 188-200 (TRTPSRASLTRTP). A compositionally biased stretch (low complexity) spans 201–226 (PTASLTRASRTRTPPRTSQTRTPPRA). Polar residues-rich tracts occupy residues 233 to 254 (SRASLTRTPSRASLTRTPSRAS), 265 to 293 (TRTPSRASLTRTPPTASLTRTPPTASLTR), 309 to 329 (LTRTPPTASLTRSPPTASLTR), 345 to 365 (LTRTPSTASLTRTPSRASLTR), 373 to 383 (TRTPSRASLTR), 399 to 408 (LTRSPPTASL), and 435 to 448 (LTRSPSTASLTRTP). A compositionally biased stretch (low complexity) spans 453–474 (LRRTPPRTSLTRTPPTASLTRT).

This is an uncharacterized protein from Homo sapiens (Human).